Consider the following 173-residue polypeptide: uncharacterized protein (173 aa).

The protein belongs to the M.jannaschii MJ0150/MJ0739/MJ0745/MJ1460/MJ1642 family.

This is an uncharacterized protein from Methanocaldococcus jannaschii (strain ATCC 43067 / DSM 2661 / JAL-1 / JCM 10045 / NBRC 100440) (Methanococcus jannaschii).